The chain runs to 2510 residues: Highly reducing polyketide synthase g433 (2510 aa).

Residues 1–54 (MAPGRTDVTVAENGNGLHTAHNGVSNGTSNGTNGTSHTSNGTNSSAKTTSNGVH) form a disordered region. Low complexity predominate over residues 22 to 45 (NGVSNGTSNGTNGTSHTSNGTNSS). A Ketosynthase family 3 (KS3) domain is found at 58–477 (DIPIAIVGMG…GANAHAVIDS (420 aa)). Residues cysteine 229, histidine 365, and histidine 400 each act as for beta-ketoacyl synthase activity in the active site. Residues 574–880 (FVFTGQGAQW…VPTLVRGQND (307 aa)) are malonyl-CoA:ACP transacylase (MAT) domain. The segment at 942 to 1070 (HDLLGCQVFE…GQVKAGRADS (129 aa)) is N-terminal hotdog fold. A dehydratase (DH) domain region spans residues 942–1226 (HDLLGCQVFE…NLRLAPAADD (285 aa)). One can recognise a PKS/mFAS DH domain in the interval 942-1229 (HDLLGCQVFE…LAPAADDTGG (288 aa)). Histidine 974 functions as the Proton acceptor; for dehydratase activity in the catalytic mechanism. Residues 1083–1229 (PRKVSSTRWY…LAPAADDTGG (147 aa)) form a C-terminal hotdog fold region. Catalysis depends on aspartate 1144, which acts as the Proton donor; for dehydratase activity. A methyltransferase (CMet) domain region spans residues 1395 to 1574 (DFLGLVSHDK…FDGAEAVIYD (180 aa)). The enoyl reductase (ER) (ER) domain stretch occupies residues 1787–2097 (GSLKTLRWVQ…KGQHMGKLVI (311 aa)). The tract at residues 2122 to 2296 (SYLLVGGLGG…ASVLDISIIE (175 aa)) is ketoreductase (KR) domain. Residues 2419-2496 (SSVSFLANEI…KLGEAAAEGL (78 aa)) enclose the Carrier domain. O-(pantetheine 4'-phosphoryl)serine is present on serine 2456.

The protein operates within mycotoxin biosynthesis. In terms of biological role, highly reducing polyketide synthase; part of the gene cluster that mediates the biosynthesis of 1233A, a natural compound known as an inhibitor of HMG-CoA synthase in the mevalonate pathway and with antibacterial and antifungal activities. The highly reducing polyketide synthase g433 gene is responsible for the 1233A backbone biosynthesis and the cytochrome P450 monooxygenase g430 catalyzes oxidation of the backbone. The chain is Highly reducing polyketide synthase g433 from Fusarium sp.